The following is a 161-amino-acid chain: MKVYKSFLIATASLFLFACSSFQNDDYAMNYKGQIGEPIMAIAMLSEQQHEWAGTPYVLGGVSRRGVDCSGFVQKTFFDRFNLRLPRSTVEQANYGKHVRKEDIQTGDLIFFKTGRGPNGYHVGIYVKEDKFLHASTRGGVVYSSMNNPYWSKAFWQVRRI.

The first 18 residues, 1-18 (MKVYKSFLIATASLFLFA), serve as a signal peptide directing secretion. Residue Cys19 is the site of N-palmitoyl cysteine attachment. A lipid anchor (S-diacylglycerol cysteine) is attached at Cys19. Residues 39–161 (IMAIAMLSEQ…SKAFWQVRRI (123 aa)) enclose the NlpC/P60 domain. The active-site Nucleophile is the Cys69. His122 (proton acceptor) is an active-site residue. The active site involves His134.

Belongs to the peptidase C40 family.

The protein localises to the cell membrane. In Haemophilus influenzae (strain ATCC 51907 / DSM 11121 / KW20 / Rd), this protein is Probable endopeptidase HI_1314.